A 169-amino-acid chain; its full sequence is General odorant-binding protein 57a (169 aa).

An N-terminal signal peptide occupies residues 1 to 20 (MFNTRLAIFLLLIVVSLSQA). Cystine bridges form between Cys-39–Cys-77, Cys-73–Cys-120, and Cys-111–Cys-129.

The protein belongs to the PBP/GOBP family.

Functionally, present in the aqueous fluid surrounding olfactory sensory dendrites and are thought to aid in the capture and transport of hydrophobic odorants into and through this fluid. The polypeptide is General odorant-binding protein 57a (Drosophila melanogaster (Fruit fly)).